Consider the following 381-residue polypeptide: MSVPSSAVRTYRITALAGDGIGPEIMQVGRAVLDAVAAQVGFSLQWQEGLIGGAAYEATGDPLPPETLKMAQESDAVYLAAVGDFKYDTLPREKRPERALLGLRAGLGLFANLRPVKIFPQLVQASSLKPEVVAGIDLVVVRELTGGIYFGQPKGIFTDAKGSRRGVNTMAYSEAEVDRIARVAFELARKRRRKLCSVDKANVLEVSQLWRERVTAIAAEYPDVELSHLYVDNAAMQLVRWPKQFDVILTENLFGDILSDEAAMLTGSIGMLPSASLGSSGPGVYEPVHGSAPDIAGQDKANPIAQVLSGAMLLRYSLDQPQAADRIEQAVEAVLAQGYRTADIYSEGMTLVGCREMGEKILAALAQQQASPQGSLSAPGG.

Residues Arg-104, Arg-114, Arg-142, and Asp-232 each coordinate substrate. The Mg(2+) site is built by Asp-232, Asp-256, and Asp-260. Position 290–302 (290–302 (GSAPDIAGQDKAN)) interacts with NAD(+).

Belongs to the isocitrate and isopropylmalate dehydrogenases family. LeuB type 1 subfamily. As to quaternary structure, homodimer. The cofactor is Mg(2+). Requires Mn(2+) as cofactor.

It localises to the cytoplasm. It catalyses the reaction (2R,3S)-3-isopropylmalate + NAD(+) = 4-methyl-2-oxopentanoate + CO2 + NADH. It participates in amino-acid biosynthesis; L-leucine biosynthesis; L-leucine from 3-methyl-2-oxobutanoate: step 3/4. Catalyzes the oxidation of 3-carboxy-2-hydroxy-4-methylpentanoate (3-isopropylmalate) to 3-carboxy-4-methyl-2-oxopentanoate. The product decarboxylates to 4-methyl-2 oxopentanoate. In Synechococcus sp. (strain JA-3-3Ab) (Cyanobacteria bacterium Yellowstone A-Prime), this protein is 3-isopropylmalate dehydrogenase.